Reading from the N-terminus, the 295-residue chain is Perivine-Nbeta-methyltransferase (295 aa).

The interval 76-85 (ILDVGCGKGG) is SAM motif I. Positions 138 to 144 (DGSFELI) match the Vacuolar targeting signal motif. The interval 139–147 (GSFELIFVI) is SAM motif II. Residues 166–175 (VAAPGAQIVI) are SAM motif III.

This sequence belongs to the class I-like SAM-binding methyltransferase superfamily. gTMT family. In terms of assembly, homodimer. Mainly expressed in young leaves, and, to a lower extent, in mature leaves, flowers, stems and roots (at protein level). Transcripts levels are highest in flowers, moderate in leaves and low in roots and stems.

Its subcellular location is the vacuole membrane. The catalysed reaction is perivine + S-adenosyl-L-methionine = vobasine + S-adenosyl-L-homocysteine + 2 H(+). Its pathway is alkaloid biosynthesis; vindoline biosynthesis. Its function is as follows. S-adenosyl-L-methionine-dependent N-methyltransferase involved in the biosynthesis of biologically active monoterpenoid indole alkaloids (MIAs) natural products including vindoline. Catalyzes the conversion of perivine to Nbeta-methylperivine (vobasine) by methylating its N4 nitrogen. Inactive with picrinine as substrate. The protein is Perivine-Nbeta-methyltransferase of Catharanthus roseus (Madagascar periwinkle).